An 89-amino-acid polypeptide reads, in one-letter code: Small ribosomal subunit protein uS15 (89 aa).

This sequence belongs to the universal ribosomal protein uS15 family. In terms of assembly, part of the 30S ribosomal subunit. Forms a bridge to the 50S subunit in the 70S ribosome, contacting the 23S rRNA.

In terms of biological role, one of the primary rRNA binding proteins, it binds directly to 16S rRNA where it helps nucleate assembly of the platform of the 30S subunit by binding and bridging several RNA helices of the 16S rRNA. Its function is as follows. Forms an intersubunit bridge (bridge B4) with the 23S rRNA of the 50S subunit in the ribosome. The sequence is that of Small ribosomal subunit protein uS15 from Prochlorococcus marinus subsp. pastoris (strain CCMP1986 / NIES-2087 / MED4).